A 136-amino-acid polypeptide reads, in one-letter code: Acyl carrier protein 2, chloroplastic (136 aa).

Residues Met1–Ser51 constitute a chloroplast transit peptide. A Carrier domain is found at Pro56–Leu131. Position 91 is an O-(pantetheine 4'-phosphoryl)serine (Ser91).

It belongs to the acyl carrier protein (ACP) family. In terms of processing, 4'-phosphopantetheine is transferred from CoA to a specific serine of apo-ACP by acpS. This modification is essential for activity because fatty acids are bound in thioester linkage to the sulfhydryl of the prosthetic group.

It localises to the plastid. The protein resides in the chloroplast. Functionally, carrier of the growing fatty acid chain in fatty acid biosynthesis. In Arabidopsis thaliana (Mouse-ear cress), this protein is Acyl carrier protein 2, chloroplastic (ACP2).